Consider the following 177-residue polypeptide: MSELTTVARPYAKAAFEFAVEAKAIDSWLVQLTFAAEVAKDETIKGFLSSGASVEQAQTLFLNVCGEQVDSQGQNFLKVMAINERLLVLPQVLEQFIALKADFDQEVSVDVTSAVEVTAEQKTTLSAALEKRLARKVKLNCFVDASIVSGLVIKAGDMVIDGSIKGKLNRLATTLQS.

This sequence belongs to the ATPase delta chain family. F-type ATPases have 2 components, F(1) - the catalytic core - and F(0) - the membrane proton channel. F(1) has five subunits: alpha(3), beta(3), gamma(1), delta(1), epsilon(1). F(0) has three main subunits: a(1), b(2) and c(10-14). The alpha and beta chains form an alternating ring which encloses part of the gamma chain. F(1) is attached to F(0) by a central stalk formed by the gamma and epsilon chains, while a peripheral stalk is formed by the delta and b chains.

It is found in the cell inner membrane. In terms of biological role, f(1)F(0) ATP synthase produces ATP from ADP in the presence of a proton or sodium gradient. F-type ATPases consist of two structural domains, F(1) containing the extramembraneous catalytic core and F(0) containing the membrane proton channel, linked together by a central stalk and a peripheral stalk. During catalysis, ATP synthesis in the catalytic domain of F(1) is coupled via a rotary mechanism of the central stalk subunits to proton translocation. Functionally, this protein is part of the stalk that links CF(0) to CF(1). It either transmits conformational changes from CF(0) to CF(1) or is implicated in proton conduction. The sequence is that of ATP synthase subunit delta from Colwellia psychrerythraea (strain 34H / ATCC BAA-681) (Vibrio psychroerythus).